The following is a 396-amino-acid chain: MAKEKFSRTKPHVNVGTIGHVDHGKTTLTAAIATVLAAKFGGEAKAYDQIDAAPEEKARGITINTAHVEYETAARHYAHVDCPGHADYVKNMITGAAQMDGAILVCSAADGPMPQTREHILLARQVGVPYIIVFLNKCDMVDDAELLELVEMEVRELLDKYDFPGDDTPIIHGSAKLALEGDKGPLGEEAIMKLADALDNYIPLPERAVDGAFLMPVEDVFSISGRGTVVTGRIERGIIKVGEEIEIVGIADTQKTICTGVEMFRKLLDQGQAGDNVGILLRGTKREDVQRGQVLCKPGSIKPHTHFTGEIYVLSKDEGGRHTPFFNNYRPQFYFRTTDVTGAIELPEGKEMVMPGDNVSITVKLINPIAMEEGLRFAIREGGRTVGAGVVAKILA.

Residues 10-206 (KPHVNVGTIG…ALDNYIPLPE (197 aa)) form the tr-type G domain. Positions 19-26 (GHVDHGKT) are G1. 19–26 (GHVDHGKT) lines the GTP pocket. Residue Thr-26 participates in Mg(2+) binding. A G2 region spans residues 60 to 64 (GITIN). Residues 81 to 84 (DCPG) are G3. GTP contacts are provided by residues 81–85 (DCPGH) and 136–139 (NKCD). The G4 stretch occupies residues 136-139 (NKCD). Residues 174–176 (SAK) are G5.

This sequence belongs to the TRAFAC class translation factor GTPase superfamily. Classic translation factor GTPase family. EF-Tu/EF-1A subfamily. In terms of assembly, monomer.

It is found in the cytoplasm. The enzyme catalyses GTP + H2O = GDP + phosphate + H(+). In terms of biological role, GTP hydrolase that promotes the GTP-dependent binding of aminoacyl-tRNA to the A-site of ribosomes during protein biosynthesis. This Polaromonas naphthalenivorans (strain CJ2) protein is Elongation factor Tu.